Here is a 318-residue protein sequence, read N- to C-terminus: Ornithine carbamoyltransferase (318 aa).

Carbamoyl phosphate contacts are provided by residues 63-66 (STRT), Q90, R114, and 141-144 (HPCQ). L-ornithine is bound by residues N172, D235, and 239–240 (SM). Residues 275 to 276 (CL) and R303 each bind carbamoyl phosphate.

Belongs to the aspartate/ornithine carbamoyltransferase superfamily. OTCase family.

The protein resides in the cytoplasm. The enzyme catalyses carbamoyl phosphate + L-ornithine = L-citrulline + phosphate + H(+). The protein operates within amino-acid biosynthesis; L-arginine biosynthesis; L-arginine from L-ornithine and carbamoyl phosphate: step 1/3. Functionally, reversibly catalyzes the transfer of the carbamoyl group from carbamoyl phosphate (CP) to the N(epsilon) atom of ornithine (ORN) to produce L-citrulline. The polypeptide is Ornithine carbamoyltransferase (Parasynechococcus marenigrum (strain WH8102)).